The primary structure comprises 201 residues: Large ribosomal subunit protein uL4 (201 aa).

The interval 43 to 71 (TRAQKTRSEVSGGGKKPWAQKGTGRARAG) is disordered.

This sequence belongs to the universal ribosomal protein uL4 family. Part of the 50S ribosomal subunit.

Its function is as follows. One of the primary rRNA binding proteins, this protein initially binds near the 5'-end of the 23S rRNA. It is important during the early stages of 50S assembly. It makes multiple contacts with different domains of the 23S rRNA in the assembled 50S subunit and ribosome. Functionally, forms part of the polypeptide exit tunnel. This chain is Large ribosomal subunit protein uL4, found in Pseudoalteromonas translucida (strain TAC 125).